A 60-amino-acid chain; its full sequence is MAQIKITLTKSPIGRIPAQRKTVVALGLGKLNSSVIKEDNAAIRGMVNAVSHLVTVEDVK.

Belongs to the universal ribosomal protein uL30 family. As to quaternary structure, part of the 50S ribosomal subunit.

The sequence is that of Large ribosomal subunit protein uL30 from Streptococcus mutans serotype c (strain ATCC 700610 / UA159).